Consider the following 407-residue polypeptide: MFSKIIQSYAKGNLIVQICIGIVLGILIGISSKEISEIANLLGILFTSALKAIAPMLVFILILTSICTKDFSQSGAKIKNIIILYIVGTFLASACAVLANFFFPVKLVLDGVQTATNSSPTHMSEIFKDLLFKIVDNPINALSSGNYLGILTWAIAGGIALKHCSNEAKQVFIDINEGVLKIVKFIVKLAPFGIFGLVANSVAQTGAQGLLSYVKLLILLVTTMLFVTFVINALIVFFYTRKNPFPLIFICLRHSAFFAFFTRSSAANIPVNMALCAKLGIDKEFYGISIPLGATINMAGAAVTIAILSLTAANTVGIEISLLQAFLLSIIATFAACGASGVAGGSLLLIPLACSLFNIDYDIAMKVVAIGFIIGVIQDSVETALNSSTDVLFTAICSKNELNYNIK.

Helical transmembrane passes span 12–32 (GNLIVQICIGIVLGILIGISS), 42–62 (LGILFTSALKAIAPMLVFILI), 81–101 (IIILYIVGTFLASACAVLANF), 141–161 (ALSSGNYLGILTWAIAGGIAL), 179–199 (VLKIVKFIVKLAPFGIFGLVA), 218–238 (ILLVTTMLFVTFVINALIVFF), 245–267 (FPLIFICLRHSAFFAFFTRSSAA), 288–308 (ISIPLGATINMAGAAVTIAIL), and 330–350 (IIATFAACGASGVAGGSLLLI).

It belongs to the dicarboxylate/amino acid:cation symporter (DAACS) (TC 2.A.23) family.

The protein resides in the cell inner membrane. The catalysed reaction is L-serine(in) + Na(+)(in) = L-serine(out) + Na(+)(out). It catalyses the reaction L-threonine(in) + Na(+)(in) = L-threonine(out) + Na(+)(out). Functionally, involved in the import of serine and threonine into the cell, with the concomitant import of sodium (symport system). The chain is Serine/threonine transporter SstT from Campylobacter jejuni subsp. jejuni serotype O:6 (strain 81116 / NCTC 11828).